We begin with the raw amino-acid sequence, 200 residues long: Small ribosomal subunit protein uS4 (200 aa).

One can recognise an S4 RNA-binding domain in the interval 106 to 170 (RRLQTIVFKK…SPIANELHPI (65 aa)). The tract at residues 178–200 (AERVKEEAEKEAAASEDGGEQDE) is disordered. Residues 179-190 (ERVKEEAEKEAA) show a composition bias toward basic and acidic residues.

Belongs to the universal ribosomal protein uS4 family. Part of the 30S ribosomal subunit. Contacts protein S5. The interaction surface between S4 and S5 is involved in control of translational fidelity.

In terms of biological role, one of the primary rRNA binding proteins, it binds directly to 16S rRNA where it nucleates assembly of the body of the 30S subunit. Its function is as follows. With S5 and S12 plays an important role in translational accuracy. This Thermoplasma volcanium (strain ATCC 51530 / DSM 4299 / JCM 9571 / NBRC 15438 / GSS1) protein is Small ribosomal subunit protein uS4.